We begin with the raw amino-acid sequence, 255 residues long: Small ribosomal subunit protein eS1 (255 aa).

Basic residues predominate over residues 1–18 (MAVGKNKRLSKGKKGLKK). Residues 1 to 28 (MAVGKNKRLSKGKKGLKKRTQDPFSRKD) form a disordered region. N-acetylalanine; partial is present on A2. The span at 19–28 (RTQDPFSRKD) shows a compositional bias: basic and acidic residues.

Belongs to the eukaryotic ribosomal protein eS1 family. As to quaternary structure, component of the small ribosomal subunit. Mature ribosomes consist of a small (40S) and a large (60S) subunit. The 40S subunit contains about 33 different proteins and 1 molecule of RNA (18S). The 60S subunit contains about 49 different proteins and 3 molecules of RNA (25S, 5.8S and 5S).

It is found in the cytoplasm. The chain is Small ribosomal subunit protein eS1 from Ajellomyces capsulatus (strain NAm1 / WU24) (Darling's disease fungus).